We begin with the raw amino-acid sequence, 1296 residues long: Phosphoribosylformylglycinamidine synthase (1296 aa).

Residues 304–323 form a disordered region; sequence WPGAATGSGGEIRDEGATGR. ATP-binding positions include 306 to 317 and A677; that span reads GAATGSGGEIRD. Mg(2+) contacts are provided by D678, E717, N721, and D885. ATP is bound at residue S887. Positions 1000–1013 are enriched in basic and acidic residues; that stretch reads PDCADQEHQAKQDE. Residues 1000–1019 form a disordered region; sequence PDCADQEHQAKQDESDPGLN. A Glutamine amidotransferase type-1 domain is found at 1043–1296; it reads VAVLREQGVN…MFRNARKQLG (254 aa). The active-site Nucleophile is the C1136. Residues H1261 and E1263 contribute to the active site.

The protein in the N-terminal section; belongs to the FGAMS family. As to quaternary structure, monomer.

It is found in the cytoplasm. It carries out the reaction N(2)-formyl-N(1)-(5-phospho-beta-D-ribosyl)glycinamide + L-glutamine + ATP + H2O = 2-formamido-N(1)-(5-O-phospho-beta-D-ribosyl)acetamidine + L-glutamate + ADP + phosphate + H(+). Its pathway is purine metabolism; IMP biosynthesis via de novo pathway; 5-amino-1-(5-phospho-D-ribosyl)imidazole from N(2)-formyl-N(1)-(5-phospho-D-ribosyl)glycinamide: step 1/2. Phosphoribosylformylglycinamidine synthase involved in the purines biosynthetic pathway. Catalyzes the ATP-dependent conversion of formylglycinamide ribonucleotide (FGAR) and glutamine to yield formylglycinamidine ribonucleotide (FGAM) and glutamate. This is Phosphoribosylformylglycinamidine synthase from Yersinia pseudotuberculosis serotype I (strain IP32953).